The primary structure comprises 119 residues: MRGSSRFRPHEKLRASDDYQRVKRSGRRVRTAHFGVNFAANDLPHHRLGLVVQKRYWNAVGRNRIKRRIREWFRLNKTRIPAPYRDIVVVARPGAEKLSSLDVTKELLAIFLHKDGRIR.

The tract at residues 1–24 (MRGSSRFRPHEKLRASDDYQRVKR) is disordered. The span at 8–21 (RPHEKLRASDDYQR) shows a compositional bias: basic and acidic residues.

This sequence belongs to the RnpA family. In terms of assembly, consists of a catalytic RNA component (M1 or rnpB) and a protein subunit.

The catalysed reaction is Endonucleolytic cleavage of RNA, removing 5'-extranucleotides from tRNA precursor.. RNaseP catalyzes the removal of the 5'-leader sequence from pre-tRNA to produce the mature 5'-terminus. It can also cleave other RNA substrates such as 4.5S RNA. The protein component plays an auxiliary but essential role in vivo by binding to the 5'-leader sequence and broadening the substrate specificity of the ribozyme. The protein is Ribonuclease P protein component of Syntrophobacter fumaroxidans (strain DSM 10017 / MPOB).